The chain runs to 584 residues: MATRFAILPVTALITLTAQAQQAPTPNDQAAAARANAEQNQQAQQRRDAQQRDATVQAPGVRSDVPRPEAYPVLPTETPCFQIDRFALDVPDSLPAASKAQGASALPMDRFAFARDWLAHYAGQCIGKQGVDLIVKGLSQAILARGYITTRVLVPEQDLSTGALKLALIPGVIRHVRFEDEKLLGTWKTAFPTRDGDVLNLRDIEQGLEQMKRVSSQDVSMRIAPGDMPGESDVVLDVKRGKPWTVVASIDNSGTRATGKLQGNVSLGIDNPLGLNDIFNVGFNQDLEFGDKRFGSHGWNAFYSIPWGYWTGTLSAYTSTYFQPLAAVNQTFVASGNMKTVDFRLNRVLTRSRNDVLGAQVRLTRRFGDSYIEGTTIPSSHQNATFLEFGLNDRHYFGSSQFDGSLAYRQGLGWLGSTDSMFAAEGGQTYRFKMVVLDANLSTPFVIGTQPFKYVTTFHGQYTGNTVSYLDSVTIGSRYTVRGFDGETLLAGSRGFYWRNELQVPVAQTGLSAYAGLDYGRVWGPEPVALVGTQLAGAVIGVKGSLMTRFGGYGYDLFAGTPVYKPSGFPTARVTVGFQLTAQF.

The signal sequence occupies residues 1-20; sequence MATRFAILPVTALITLTAQA. The segment covering 24–44 has biased composition (low complexity); that stretch reads PTPNDQAAAARANAEQNQQAQ. A disordered region spans residues 24–72; it reads PTPNDQAAAARANAEQNQQAQQRRDAQQRDATVQAPGVRSDVPRPEAYP. The 74-residue stretch at 98-171 folds into the POTRA domain; that stretch reads SKAQGASALP…GALKLALIPG (74 aa).

Belongs to the TPS (TC 1.B.20) family.

Its subcellular location is the cell outer membrane. Its function is as follows. Potential outer membrane protein component of a toxin-immunity protein module, which functions as a cellular contact-dependent growth inhibition (CDI) system. CDI modules allow bacteria to communicate with and inhibit the growth of closely related neighboring bacteria in a contact-dependent fashion. This protein may be required for secretion and assembly of the CdiA toxin protein. Functionally, expression of this cdiAIB locus in B.thailandensis confers protection against other bacteria carrying the locus; growth inhibition requires cellular contact. Probable member of a two partner secretion pathway (TPS) in which it mediates the secretion of CdiA2. In Burkholderia pseudomallei (strain 1026b), this protein is Outer membrane transporter CdiB-2 (cdiB2).